Here is a 514-residue protein sequence, read N- to C-terminus: ATP synthase subunit alpha (514 aa).

170-177 (GDRQIGKT) contributes to the ATP binding site.

It belongs to the ATPase alpha/beta chains family. F-type ATPases have 2 components, CF(1) - the catalytic core - and CF(0) - the membrane proton channel. CF(1) has five subunits: alpha(3), beta(3), gamma(1), delta(1), epsilon(1). CF(0) has three main subunits: a(1), b(2) and c(9-12). The alpha and beta chains form an alternating ring which encloses part of the gamma chain. CF(1) is attached to CF(0) by a central stalk formed by the gamma and epsilon chains, while a peripheral stalk is formed by the delta and b chains.

It localises to the cell inner membrane. The enzyme catalyses ATP + H2O + 4 H(+)(in) = ADP + phosphate + 5 H(+)(out). Produces ATP from ADP in the presence of a proton gradient across the membrane. The alpha chain is a regulatory subunit. In Pseudomonas syringae pv. tomato (strain ATCC BAA-871 / DC3000), this protein is ATP synthase subunit alpha.